The primary structure comprises 419 residues: UDP-N-acetylglucosamine 1-carboxyvinyltransferase (419 aa).

22-23 (KN) provides a ligand contact to phosphoenolpyruvate. Arg-92 provides a ligand contact to UDP-N-acetyl-alpha-D-glucosamine. Cys-116 serves as the catalytic Proton donor. Cys-116 is subject to 2-(S-cysteinyl)pyruvic acid O-phosphothioketal. UDP-N-acetyl-alpha-D-glucosamine contacts are provided by residues 121–125 (RPIDQ), Asp-305, and Ile-327.

The protein belongs to the EPSP synthase family. MurA subfamily.

The protein localises to the cytoplasm. It carries out the reaction phosphoenolpyruvate + UDP-N-acetyl-alpha-D-glucosamine = UDP-N-acetyl-3-O-(1-carboxyvinyl)-alpha-D-glucosamine + phosphate. The protein operates within cell wall biogenesis; peptidoglycan biosynthesis. Cell wall formation. Adds enolpyruvyl to UDP-N-acetylglucosamine. This is UDP-N-acetylglucosamine 1-carboxyvinyltransferase from Trichlorobacter lovleyi (strain ATCC BAA-1151 / DSM 17278 / SZ) (Geobacter lovleyi).